Consider the following 701-residue polypeptide: Polyribonucleotide nucleotidyltransferase (701 aa).

The Mg(2+) site is built by Asp-489 and Asp-495. The 60-residue stretch at 556-615 (PRIHTMKIHPDKIREVIGSGGKVIRSITEETGCAIDIEDDGTIRIASSDQASAEQAVKII) folds into the KH domain. Positions 625–693 (GQVYEGKVVR…RQGRVKLTMK (69 aa)) constitute an S1 motif domain.

The protein belongs to the polyribonucleotide nucleotidyltransferase family. Mg(2+) serves as cofactor.

The protein localises to the cytoplasm. It catalyses the reaction RNA(n+1) + phosphate = RNA(n) + a ribonucleoside 5'-diphosphate. Functionally, involved in mRNA degradation. Catalyzes the phosphorolysis of single-stranded polyribonucleotides processively in the 3'- to 5'-direction. The protein is Polyribonucleotide nucleotidyltransferase of Magnetococcus marinus (strain ATCC BAA-1437 / JCM 17883 / MC-1).